The chain runs to 239 residues: tRNA (guanine-N(7)-)-methyltransferase (239 aa).

Positions 69, 94, 121, and 144 each coordinate S-adenosyl-L-methionine. D144 is a catalytic residue. Residues K148, D180, and 217–220 (TKFE) contribute to the substrate site.

Belongs to the class I-like SAM-binding methyltransferase superfamily. TrmB family. Monomer.

The enzyme catalyses guanosine(46) in tRNA + S-adenosyl-L-methionine = N(7)-methylguanosine(46) in tRNA + S-adenosyl-L-homocysteine. Its pathway is tRNA modification; N(7)-methylguanine-tRNA biosynthesis. Catalyzes the formation of N(7)-methylguanine at position 46 (m7G46) in tRNA. The sequence is that of tRNA (guanine-N(7)-)-methyltransferase from Buchnera aphidicola subsp. Acyrthosiphon pisum (strain Tuc7).